Consider the following 372-residue polypeptide: Cyclin-dependent kinase 9 (372 aa).

Residues 19–315 (YEKLAKIGQG…SDDALNHDFF (297 aa)) form the Protein kinase domain. 25–33 (IGQGTFGEV) serves as a coordination point for ATP. N6-acetyllysine; by EP300/CBP, PCAF/KAT2B and GCN5/KAT2A is present on lysine 44. ATP is bound by residues lysine 48 and 104 to 106 (DFC). Lysine 48 carries the N6-acetyllysine; by PCAF/KAT2B and GCN5/KAT2A modification. Catalysis depends on aspartate 149, which acts as the Proton acceptor. The segment at 166–191 (ADFGLARAFSLAKNSQPNRYTNRVVT) is T-loop. An ATP-binding site is contributed by aspartate 167. Serine 175 bears the Phosphoserine mark. The residue at position 186 (threonine 186) is a Phosphothreonine; by CaMK1D. Positions 343–372 (RRKGSQITQQSTNQSRNPATTNQTEFERVF) are disordered. The residue at position 347 (serine 347) is a Phosphoserine; by CDK9 and PKA. Over residues 347–366 (SQITQQSTNQSRNPATTNQT) the composition is skewed to polar residues. Phosphothreonine; by CDK9 is present on threonine 350. Serine 353 bears the Phosphoserine; by CDK9 mark. Residue threonine 354 is modified to Phosphothreonine; by CDK9. Serine 357 bears the Phosphoserine; by CDK9 mark. A phosphothreonine; by CDK9 mark is found at threonine 362 and threonine 363.

The protein belongs to the protein kinase superfamily. CMGC Ser/Thr protein kinase family. CDC2/CDKX subfamily. In terms of assembly, component of the super elongation complex (SEC), at least composed of EAF1, EAF2, CDK9, MLLT3/AF9, AFF (AFF1 or AFF4), the P-TEFb complex and ELL (ELL, ELL2 or ELL3). Associates with CCNT1/cyclin-T1, CCNT2/cyclin-T2 (isoform A and isoform B) or CCNK/cyclin-K to form active P-TEFb. P-TEFb forms a complex with AFF4/AF5Q31 and is part of the super elongation complex (SEC). Component of a complex which is composed of at least 5 members: HTATSF1/Tat-SF1, P-TEFb complex, RNA pol II, SUPT5H, and NCL/nucleolin. Associates with UBR5 and forms a transcription regulatory complex composed of CDK9, RNAP II, UBR5 and TFIIS/TCEA1 that can stimulate target gene transcription (e.g. gamma fibrinogen/FGG) by recruiting their promoters. Component of the 7SK snRNP inactive complex which is composed of at least 8 members: P-TEFb (composed of CDK9 and CCNT1/cyclin-T1), HEXIM1, HEXIM2, LARP7, BCDIN3, SART3 proteins and 7SK and U6 snRNAs. This inactive 7SK snRNP complex can also interact with NCOR1 and HDAC3, probably to regulate CDK9 acetylation. Release of P-TEFb from P-TEFb/7SK snRNP complex requires both PP2B to transduce calcium Ca(2+) signaling in response to stimuli (e.g. UV or hexamethylene bisacetamide (HMBA)), and PPP1CA to dephosphorylate Thr-186. This released P-TEFb remains inactive in the pre-initiation complex with BRD4 until new Thr-186 phosphorylation occurs after the synthesis of a short RNA. Interacts with BRD4; to target chromatin binding. Interacts with JMJD6. Interacts with activated nuclear STAT3 and RELA/p65. Binds to AR and MYOD1. Forms a complex composed of CDK9, CCNT1/cyclin-T1, EP300 and GATA4 that stimulates hypertrophy in cardiomyocytes. The large PER complex involved in the repression of transcriptional termination is composed of at least PER2, CDK9, DDX5, DHX9, NCBP1 and POLR2A (active). Interacts with HSF1. Interacts with TBX21. Interacts with WDR43. Interacts with ZMYND8; the association appears to occur between homodimeric ZMYND8 and the activated form of the P-TEFb complex. Post-translationally, autophosphorylation at Thr-186, Ser-347, Thr-350, Ser-353, Thr-354 and Ser-357 triggers kinase activity by promoting cyclin and substrate binding upon conformational changes. Thr-186 phosphorylation requires the calcium Ca(2+) signaling pathway, including CaMK1D and calmodulin. This inhibition is relieved by Thr-29 dephosphorylation. Phosphorylation at Ser-175 inhibits kinase activity. Can be phosphorylated on either Thr-362 or Thr-363 but not on both simultaneously. Dephosphorylation of Thr-186 by PPM1A and PPM1B blocks CDK9 activity and may lead to CDK9 proteasomal degradation. However, PPP1CA-mediated Thr-186 dephosphorylation is required to release P-TEFb from its inactive P-TEFb/7SK snRNP complex. Dephosphorylated at Ser-347 by the PNUTS-PP1 complex during RNA polymerase II transcription pause-release. Dephosphorylation of C-terminus Thr and Ser residues by protein phosphatase-1 (PP1) triggers CDK9 activity. In terms of processing, N6-acetylation of Lys-44 promotes kinase activity, whereas acetylation of both Lys-44 and Lys-48 mediated by PCAF/KAT2B and GCN5/KAT2A reduces kinase activity. The acetylated form associates with PML bodies in the nuclear matrix and with the transcriptionally silent HIV-1 genome; deacetylated upon transcription stimulation. Deacetylated by SIRT7, promoting the kinase activity and subsequent 'Ser-2' phosphorylation of the C-terminal domain (CTD) of RNA polymerase II. Post-translationally, polyubiquitinated and thus activated by UBR5. This ubiquitination is promoted by TFIIS/TCEA1 and favors 'Ser-2' phosphorylation of RPB1/POLR2A CTD. As to expression, expressed at high levels in brain and kidney.

The protein resides in the nucleus. Its subcellular location is the cytoplasm. It localises to the PML body. It carries out the reaction L-seryl-[protein] + ATP = O-phospho-L-seryl-[protein] + ADP + H(+). The catalysed reaction is L-threonyl-[protein] + ATP = O-phospho-L-threonyl-[protein] + ADP + H(+). The enzyme catalyses [DNA-directed RNA polymerase] + ATP = phospho-[DNA-directed RNA polymerase] + ADP + H(+). With respect to regulation, activation by Thr-186 phosphorylation is calcium Ca(2+) signaling pathway-dependent; actively inactivated by dephosphorylation mediated by PPP1CA, PPM1A and PPM1B. Reversibly repressed by acetylation at Lys-44 and Lys-48. Protein kinase involved in the regulation of transcription. Member of the cyclin-dependent kinase pair (CDK9/cyclin-T) complex, also called positive transcription elongation factor b (P-TEFb), which facilitates the transition from abortive to productive elongation by phosphorylating the CTD (C-terminal domain) of the large subunit of RNA polymerase II (RNAP II) POLR2A, SUPT5H and RDBP. This complex is inactive when in the 7SK snRNP complex form. Phosphorylates EP300, MYOD1, RPB1/POLR2A and AR and the negative elongation factors DSIF and NELFE. Regulates cytokine inducible transcription networks by facilitating promoter recognition of target transcription factors (e.g. TNF-inducible RELA/p65 activation and IL-6-inducible STAT3 signaling). Promotes RNA synthesis in genetic programs for cell growth, differentiation and viral pathogenesis. P-TEFb is also involved in cotranscriptional histone modification, mRNA processing and mRNA export. Modulates a complex network of chromatin modifications including histone H2B monoubiquitination (H2Bub1), H3 lysine 4 trimethylation (H3K4me3) and H3K36me3; integrates phosphorylation during transcription with chromatin modifications to control co-transcriptional histone mRNA processing. The CDK9/cyclin-K complex has also a kinase activity towards CTD of RNAP II and can substitute for CDK9/cyclin-T P-TEFb in vitro. Replication stress response protein; the CDK9/cyclin-K complex is required for genome integrity maintenance, by promoting cell cycle recovery from replication arrest and limiting single-stranded DNA amount in response to replication stress, thus reducing the breakdown of stalled replication forks and avoiding DNA damage. In addition, probable function in DNA repair of isoform 2 via interaction with KU70/XRCC6. Promotes cardiac myocyte enlargement. RPB1/POLR2A phosphorylation on 'Ser-2' in CTD activates transcription. AR phosphorylation modulates AR transcription factor promoter selectivity and cell growth. DSIF and NELF phosphorylation promotes transcription by inhibiting their negative effect. The phosphorylation of MYOD1 enhances its transcriptional activity and thus promotes muscle differentiation. Catalyzes phosphorylation of KAT5, promoting KAT5 recruitment to chromatin and histone acetyltransferase activity. The chain is Cyclin-dependent kinase 9 (Cdk9) from Mus musculus (Mouse).